The following is a 504-amino-acid chain: MKLLEQIEKWAIETPDQTAFVWRDAKITYKQLKEDSDALAHWISSEYPDDRSPIMVYGHMQPEMIINFLGCVKAGHAYIPVDLSIPADRVQRIAENSGAKLLLSAAAVTVTDLPVRIVSEDNLKDIFFTHKGNTPNPEHAVKGDENFYIIYTSGSTGNPKGVQITYNCLVSFTQWAVEDFNLQTGQVFLNQAPFSFDLSVMDIYPSLVTGGTLWAIDKDMIARPKDLFASLEQSDIQVWTSTPSFAEMCLMEASFSESMLPNMKTFLFCGEVLPNEVARKLIERFPKATIMNTYGPTEATVAVTGIHVTEEVLDQYKSLPVGYCKSDCRLLIMKEDGTIAPDGEKGEIVIVGPSVSVGYLGSPELTEKAFTMIDGERAYKTGDAGYVENGLLFYNGRLDFQIKLHGYRMELEEIEHHLRACSYVEGAVIVPIKKGEKYDYLLAVVVPGEHSFEKEFKLTSAIKKELNERLPNYMIPRKFMYQSSIPMTPNGKVDRKKLLSEVTA.

Residue 152–153 coordinates ATP; the sequence is TS. Position 197 (Asp197) interacts with D-alanine. 292-297 serves as a coordination point for ATP; the sequence is NTYGPT. Val301 contacts D-alanine. Residues Asp383, 394–397, and Lys492 contribute to the ATP site; that span reads YNGR. Residue Lys492 participates in D-alanine binding.

It belongs to the ATP-dependent AMP-binding enzyme family. DltA subfamily.

It localises to the cytoplasm. The catalysed reaction is holo-[D-alanyl-carrier protein] + D-alanine + ATP = D-alanyl-[D-alanyl-carrier protein] + AMP + diphosphate. It participates in cell wall biogenesis; lipoteichoic acid biosynthesis. In terms of biological role, catalyzes the first step in the D-alanylation of lipoteichoic acid (LTA), the activation of D-alanine and its transfer onto the D-alanyl carrier protein (Dcp) DltC. In an ATP-dependent two-step reaction, forms a high energy D-alanyl-AMP intermediate, followed by transfer of the D-alanyl residue as a thiol ester to the phosphopantheinyl prosthetic group of the Dcp. D-alanylation of LTA plays an important role in modulating the properties of the cell wall in Gram-positive bacteria, influencing the net charge of the cell wall. This chain is D-alanine--D-alanyl carrier protein ligase, found in Bacillus thuringiensis (strain Al Hakam).